The following is a 671-amino-acid chain: Probable serine/threonine-protein kinase DDB_G0286627 (671 aa).

A Protein kinase domain is found at 31 to 283; the sequence is WVIERQLSKG…SHQLIKHPFF (253 aa). Residues 37 to 45 and K61 contribute to the ATP site; that span reads LSKGSFGQV. D148 (proton acceptor) is an active-site residue. A helical membrane pass occupies residues 369–389; sequence FKIIYLFLILLFLMTILVNLN. The interval 410–523 is disordered; that stretch reads PESNPIKKPS…PPVTETPKPT (114 aa). The segment covering 427 to 490 has biased composition (low complexity); that stretch reads NQYSEGSQSS…PTDSSTTDPP (64 aa). Positions 491–513 are enriched in pro residues; sequence VTDPPITDPPITDPPVTDPPITE.

It belongs to the protein kinase superfamily. STE Ser/Thr protein kinase family. Mg(2+) serves as cofactor.

It is found in the membrane. The enzyme catalyses L-seryl-[protein] + ATP = O-phospho-L-seryl-[protein] + ADP + H(+). The catalysed reaction is L-threonyl-[protein] + ATP = O-phospho-L-threonyl-[protein] + ADP + H(+). The sequence is that of Probable serine/threonine-protein kinase DDB_G0286627 from Dictyostelium discoideum (Social amoeba).